Consider the following 396-residue polypeptide: Elongation factor Tu (396 aa).

A tr-type G domain is found at 10–206; the sequence is KPHVNVGTIG…ALDSYIPEPT (197 aa). The tract at residues 19–26 is G1; that stretch reads GHVDHGKT. Residue 19–26 coordinates GTP; the sequence is GHVDHGKT. T26 serves as a coordination point for Mg(2+). A G2 region spans residues 60–64; that stretch reads GITIS. Positions 81 to 84 are G3; sequence DCPG. GTP is bound by residues 81-85 and 136-139; these read DCPGH and NKAD. Residues 136–139 are G4; it reads NKAD. The G5 stretch occupies residues 174–176; that stretch reads SAL.

This sequence belongs to the TRAFAC class translation factor GTPase superfamily. Classic translation factor GTPase family. EF-Tu/EF-1A subfamily. As to quaternary structure, monomer.

The protein resides in the cytoplasm. It catalyses the reaction GTP + H2O = GDP + phosphate + H(+). Functionally, GTP hydrolase that promotes the GTP-dependent binding of aminoacyl-tRNA to the A-site of ribosomes during protein biosynthesis. The chain is Elongation factor Tu from Hydrogenovibrio crunogenus (strain DSM 25203 / XCL-2) (Thiomicrospira crunogena).